Here is a 284-residue protein sequence, read N- to C-terminus: Acetylglutamate kinase (284 aa).

Substrate contacts are provided by residues 66–67, Arg88, and Asn179; that span reads GG.

This sequence belongs to the acetylglutamate kinase family. ArgB subfamily.

The protein resides in the cytoplasm. It catalyses the reaction N-acetyl-L-glutamate + ATP = N-acetyl-L-glutamyl 5-phosphate + ADP. It functions in the pathway amino-acid biosynthesis; L-arginine biosynthesis; N(2)-acetyl-L-ornithine from L-glutamate: step 2/4. Its function is as follows. Catalyzes the ATP-dependent phosphorylation of N-acetyl-L-glutamate. This is Acetylglutamate kinase from Actinobacillus pleuropneumoniae serotype 3 (strain JL03).